Consider the following 229-residue polypeptide: ATP synthase subunit a (229 aa).

Transmembrane regions (helical) follow at residues 25 to 45 (VHII…VLGA), 58 to 75 (FLEV…SVTG), 81 to 101 (FFPL…IGLV), 110 to 130 (SINT…FIGI), 141 to 161 (FLGP…IGHL), 175 to 195 (MMGH…FFAP), and 196 to 216 (LPIM…FFLL).

Belongs to the ATPase A chain family. In terms of assembly, F-type ATPases have 2 components, CF(1) - the catalytic core - and CF(0) - the membrane proton channel. CF(1) has five subunits: alpha(3), beta(3), gamma(1), delta(1), epsilon(1). CF(0) has three main subunits: a(1), b(2) and c(9-12). The alpha and beta chains form an alternating ring which encloses part of the gamma chain. CF(1) is attached to CF(0) by a central stalk formed by the gamma and epsilon chains, while a peripheral stalk is formed by the delta and b chains.

The protein localises to the cell inner membrane. Its function is as follows. Key component of the proton channel; it plays a direct role in the translocation of protons across the membrane. The chain is ATP synthase subunit a from Desulfosudis oleivorans (strain DSM 6200 / JCM 39069 / Hxd3) (Desulfococcus oleovorans).